Reading from the N-terminus, the 339-residue chain is DNA-directed RNA polymerase subunit alpha (339 aa).

The tract at residues 1–233 (MVREEVAGST…DLFLPFLHAE (233 aa)) is alpha N-terminal domain (alpha-NTD). The alpha C-terminal domain (alpha-CTD) stretch occupies residues 264-339 (KKGIPLNCIF…IDLLKNKLSF (76 aa)).

It belongs to the RNA polymerase alpha chain family. As to quaternary structure, in plastids the minimal PEP RNA polymerase catalytic core is composed of four subunits: alpha, beta, beta', and beta''. When a (nuclear-encoded) sigma factor is associated with the core the holoenzyme is formed, which can initiate transcription.

The protein resides in the plastid. Its subcellular location is the chloroplast. The enzyme catalyses RNA(n) + a ribonucleoside 5'-triphosphate = RNA(n+1) + diphosphate. Its function is as follows. DNA-dependent RNA polymerase catalyzes the transcription of DNA into RNA using the four ribonucleoside triphosphates as substrates. The sequence is that of DNA-directed RNA polymerase subunit alpha from Bromus inermis (Smooth brome grass).